A 654-amino-acid polypeptide reads, in one-letter code: ATP-dependent rRNA helicase spb-4 (654 aa).

Residues 17-45 (WDALTPPLAQWILDYLSSMGFTQPTPVQK) carry the Q motif motif. The region spanning 48-249 (LELFRGNKDV…TVGLLYPHKI (202 aa)) is the Helicase ATP-binding domain. 61 to 68 (AVTGSGKT) contacts ATP. Residues 197–200 (DEAD) carry the DEAD box motif. The Helicase C-terminal domain occupies 286–444 (AIVQLLEKLE…VTPDEVERVS (159 aa)). A coiled-coil region spans residues 531 to 631 (REKKRQEELA…EERAAALAAN (101 aa)). The span at 542–577 (WKEEKAKRAQEENTGDKRKKNEAWSGKAEQEETKLQ) shows a compositional bias: basic and acidic residues. The tract at residues 542–654 (WKEEKAKRAQ…SDEEFGGFDD (113 aa)) is disordered. The segment covering 578–588 (RREKKRRKREA) has biased composition (basic residues). A compositionally biased stretch (basic and acidic residues) spans 589–625 (KKFSEMTEKEKEEHLKLEQMIEEVRKRNEAKAAEERA). Residues 644–654 (DSDEEFGGFDD) show a composition bias toward acidic residues.

This sequence belongs to the DEAD box helicase family. DDX55/SPB4 subfamily. As to quaternary structure, component of pre-60S ribosomal complexes.

The protein localises to the nucleus. Its subcellular location is the nucleolus. It catalyses the reaction ATP + H2O = ADP + phosphate + H(+). ATP-binding RNA helicase involved in the biogenesis of 60S ribosomal subunits. Binds 90S pre-ribosomal particles and dissociates from pre-60S ribosomal particles after processing of 27SB pre-rRNA. Required for the normal formation of 18S rRNA through the processing of pre-rRNAs at sites A0, A1 and A2, and the normal formation of 25S and 5.8S rRNAs through the processing of pre-rRNAs at sites C1 and C2. This is ATP-dependent rRNA helicase spb-4 from Neurospora crassa (strain ATCC 24698 / 74-OR23-1A / CBS 708.71 / DSM 1257 / FGSC 987).